A 130-amino-acid chain; its full sequence is Holo-[acyl-carrier-protein] synthase (130 aa).

2 residues coordinate Mg(2+): aspartate 8 and glutamate 62.

This sequence belongs to the P-Pant transferase superfamily. AcpS family. Mg(2+) serves as cofactor.

The protein localises to the cytoplasm. The enzyme catalyses apo-[ACP] + CoA = holo-[ACP] + adenosine 3',5'-bisphosphate + H(+). In terms of biological role, transfers the 4'-phosphopantetheine moiety from coenzyme A to a Ser of acyl-carrier-protein. The sequence is that of Holo-[acyl-carrier-protein] synthase from Variovorax paradoxus (strain S110).